The primary structure comprises 334 residues: Fructose-1,6-bisphosphatase class 1 (334 aa).

Mg(2+) contacts are provided by Glu-91, Asp-113, Leu-115, and Asp-116. Substrate-binding positions include 116-119 (DGSS), Asn-208, and Lys-274. Residue Glu-280 coordinates Mg(2+).

Belongs to the FBPase class 1 family. Homotetramer. Requires Mg(2+) as cofactor.

Its subcellular location is the cytoplasm. It carries out the reaction beta-D-fructose 1,6-bisphosphate + H2O = beta-D-fructose 6-phosphate + phosphate. Its pathway is carbohydrate biosynthesis; gluconeogenesis. This is Fructose-1,6-bisphosphatase class 1 from Janthinobacterium sp. (strain Marseille) (Minibacterium massiliensis).